Here is a 66-residue protein sequence, read N- to C-terminus: MLRYSLQARSALRGVRFSSSHSAPKPGSTIPFYINKKPLPTLLYFGTFGVIFSIPFIVVKYHNRNL.

The transit peptide at 1 to 17 directs the protein to the mitochondrion; it reads MLRYSLQARSALRGVRF. The Mitochondrial matrix portion of the chain corresponds to 18–38; the sequence is SSSHSAPKPGSTIPFYINKKP. The chain crosses the membrane as a helical span at residues 39–59; the sequence is LPTLLYFGTFGVIFSIPFIVV. At 60-66 the chain is on the mitochondrial intermembrane side; sequence KYHNRNL.

Belongs to the cytochrome c oxidase VIIc family. Component of the cytochrome c oxidase (complex IV, CIV), a multisubunit enzyme composed of a catalytic core of 3 subunits and several supernumerary subunits. The complex exists as a monomer or a dimer and forms supercomplexes (SCs) in the inner mitochondrial membrane with ubiquinol-cytochrome c oxidoreductase (cytochrome b-c1 complex, complex III, CIII).

It is found in the mitochondrion inner membrane. Its pathway is energy metabolism; oxidative phosphorylation. In terms of biological role, component of the cytochrome c oxidase, the last enzyme in the mitochondrial electron transport chain which drives oxidative phosphorylation. The respiratory chain contains 3 multisubunit complexes succinate dehydrogenase (complex II, CII), ubiquinol-cytochrome c oxidoreductase (cytochrome b-c1 complex, complex III, CIII) and cytochrome c oxidase (complex IV, CIV), that cooperate to transfer electrons derived from NADH and succinate to molecular oxygen, creating an electrochemical gradient over the inner membrane that drives transmembrane transport and the ATP synthase. Cytochrome c oxidase is the component of the respiratory chain that catalyzes the reduction of oxygen to water. Electrons originating from reduced cytochrome c in the intermembrane space (IMS) are transferred via the dinuclear copper A center (CU(A)) of subunit 2 and heme A of subunit 1 to the active site in subunit 1, a binuclear center (BNC) formed by heme A3 and copper B (CU(B)). The BNC reduces molecular oxygen to 2 water molecules using 4 electrons from cytochrome c in the IMS and 4 protons from the mitochondrial matrix. This is Cytochrome c oxidase polypeptide VIII, mitochondrial (cox8) from Schizosaccharomyces pombe (strain 972 / ATCC 24843) (Fission yeast).